A 368-amino-acid chain; its full sequence is tRNA-specific 2-thiouridylase MnmA (368 aa).

Residues 11-18 (GMSGGVDS) and M37 each bind ATP. The tract at residues 97-99 (NPD) is interaction with target base in tRNA. C102 (nucleophile) is an active-site residue. A disulfide bridge connects residues C102 and C199. Residue G127 coordinates ATP. The tract at residues 149–151 (KDQ) is interaction with tRNA. C199 (cysteine persulfide intermediate) is an active-site residue. Positions 311–312 (RY) are interaction with tRNA.

It belongs to the MnmA/TRMU family. As to quaternary structure, interacts with TusE.

It localises to the cytoplasm. The catalysed reaction is S-sulfanyl-L-cysteinyl-[protein] + uridine(34) in tRNA + AH2 + ATP = 2-thiouridine(34) in tRNA + L-cysteinyl-[protein] + A + AMP + diphosphate + H(+). Catalyzes the 2-thiolation of uridine at the wobble position (U34) of tRNA(Lys), tRNA(Glu) and tRNA(Gln), leading to the formation of s(2)U34, the first step of tRNA-mnm(5)s(2)U34 synthesis. Sulfur is provided by IscS, via a sulfur-relay system. Binds ATP and its substrate tRNAs. The protein is tRNA-specific 2-thiouridylase MnmA of Klebsiella pneumoniae subsp. pneumoniae (strain ATCC 700721 / MGH 78578).